An 89-amino-acid polypeptide reads, in one-letter code: Putative regulatory protein CYA_2696 (89 aa).

The protein belongs to the RemA family.

This Synechococcus sp. (strain JA-3-3Ab) (Cyanobacteria bacterium Yellowstone A-Prime) protein is Putative regulatory protein CYA_2696.